A 296-amino-acid chain; its full sequence is Nicotinate dehydrogenase FAD-subunit (296 aa).

Residues 1–179 enclose the FAD-binding PCMH-type domain; the sequence is MKDFEFFAPK…TEVIIDRPDA (179 aa). FAD is bound by residues 29–36, G101, 110–114, D123, R160, M169, and K187; these read IIAGGTDL and TIGGN.

As to quaternary structure, heterooctamer of NDHM, NDHL, NDHS and NDHF. Dimer of heterotetramers. Requires FAD as cofactor.

The enzyme catalyses nicotinate + NADP(+) + H2O = 6-hydroxynicotinate + NADPH + H(+). The protein operates within cofactor degradation; nicotinate degradation; 6-hydroxynicotinate from nicotinate: step 1/1. Its activity is regulated as follows. Reversibly inactivated by selenide and sulfide. Not inhibited by cyanide. Catalyzes the hydroxylation of nicotinate to 6-hydroxynicotinate. Also active against 2-pyrazinecarboxylic acid, but inactive against other nicotinate analogs. The chain is Nicotinate dehydrogenase FAD-subunit (ndhF) from Eubacterium barkeri (Clostridium barkeri).